A 174-amino-acid polypeptide reads, in one-letter code: Variant surface antigen F (174 aa).

An N-terminal signal peptide occupies residues Met1 to Ser29. Cys30 carries the N-palmitoyl cysteine lipid modification. Cys30 carries S-diacylglycerol cysteine lipidation. A disordered region spans residues Gln32–Lys174. Residues Ser43–Asn53 show a composition bias toward gly residues. 9 tandem repeats follow at residues Ser55–Gln67, Gly68–Gln80, Gly81–Gln93, Gly94–Gln106, Gly107–Gln119, Gly120–Gln132, Gly133–Gln145, Gly146–Gln158, and Gly159–Gln171. Positions Ser55 to Gln171 are 9 X 13 AA tandem repeats. Residues Glu62 to Lys174 show a composition bias toward polar residues.

It localises to the cell membrane. Responsible for the antigenic diversity for host adaptation. Expression in E.coli of a construct containing vlpD, vlpE, and vlpF yields antigenically distinguishable products corresponding to each gene. In Mesomycoplasma hyorhinis (Mycoplasma hyorhinis), this protein is Variant surface antigen F (vlpF).